The sequence spans 155 residues: Ribosome maturation factor RimP (155 aa).

Belongs to the RimP family.

The protein localises to the cytoplasm. Its function is as follows. Required for maturation of 30S ribosomal subunits. This chain is Ribosome maturation factor RimP, found in Synechococcus sp. (strain CC9605).